Consider the following 208-residue polypeptide: 3,4-dihydroxy-2-butanone 4-phosphate synthase (208 aa).

Threonine 3 is modified (phosphothreonine). Residue glutamate 27 participates in Mg(2+) binding. Residue aspartate 31 participates in D-ribulose 5-phosphate binding. S-glutathionyl cysteine; by GRX2 is present on cysteine 56. Residues threonine 88 and 145–149 (RRGHT) each bind D-ribulose 5-phosphate. Histidine 148 serves as a coordination point for Mg(2+).

The protein belongs to the DHBP synthase family. As to quaternary structure, homodimer. The cofactor is Mg(2+). It depends on Mn(2+) as a cofactor. In terms of processing, S-glutathionylation of Cys-56 is reversible and dependent on the cytoplasmic isoform of glutaredoxin-2.

It is found in the cytoplasm. The protein localises to the nucleus. It localises to the mitochondrion intermembrane space. It catalyses the reaction D-ribulose 5-phosphate = (2S)-2-hydroxy-3-oxobutyl phosphate + formate + H(+). It participates in cofactor biosynthesis; riboflavin biosynthesis; 2-hydroxy-3-oxobutyl phosphate from D-ribulose 5-phosphate: step 1/1. Catalyzes the conversion of D-ribulose 5-phosphate to formate and 3,4-dihydroxy-2-butanone 4-phosphate. Also has an unrelated function in expression of mitochondrial respiration. This Saccharomyces cerevisiae (strain ATCC 204508 / S288c) (Baker's yeast) protein is 3,4-dihydroxy-2-butanone 4-phosphate synthase (RIB3).